Here is a 206-residue protein sequence, read N- to C-terminus: ATP phosphoribosyltransferase (206 aa).

The protein belongs to the ATP phosphoribosyltransferase family. Short subfamily. As to quaternary structure, heteromultimer composed of HisG and HisZ subunits.

It localises to the cytoplasm. It carries out the reaction 1-(5-phospho-beta-D-ribosyl)-ATP + diphosphate = 5-phospho-alpha-D-ribose 1-diphosphate + ATP. It participates in amino-acid biosynthesis; L-histidine biosynthesis; L-histidine from 5-phospho-alpha-D-ribose 1-diphosphate: step 1/9. In terms of biological role, catalyzes the condensation of ATP and 5-phosphoribose 1-diphosphate to form N'-(5'-phosphoribosyl)-ATP (PR-ATP). Has a crucial role in the pathway because the rate of histidine biosynthesis seems to be controlled primarily by regulation of HisG enzymatic activity. This chain is ATP phosphoribosyltransferase, found in Leptospira interrogans serogroup Icterohaemorrhagiae serovar copenhageni (strain Fiocruz L1-130).